Reading from the N-terminus, the 319-residue chain is ATP-dependent 6-phosphofructokinase (319 aa).

Residue Gly11 participates in ATP binding. ADP is bound at residue 21-25 (RAVVR). ATP-binding positions include 72 to 73 (RC) and 102 to 105 (GDGS). Asp103 serves as a coordination point for Mg(2+). 125 to 127 (TID) serves as a coordination point for substrate. The Proton acceptor role is filled by Asp127. Arg154 lines the ADP pocket. Residues Arg162 and 169–171 (MGR) contribute to the substrate site. Residues 185–187 (GAE), Arg211, and 213–215 (KKH) contribute to the ADP site. Substrate is bound by residues Glu222, Arg243, and 249–252 (HVQR).

The protein belongs to the phosphofructokinase type A (PFKA) family. ATP-dependent PFK group I subfamily. Prokaryotic clade 'B1' sub-subfamily. In terms of assembly, homotetramer. Mg(2+) is required as a cofactor.

It is found in the cytoplasm. The enzyme catalyses beta-D-fructose 6-phosphate + ATP = beta-D-fructose 1,6-bisphosphate + ADP + H(+). It participates in carbohydrate degradation; glycolysis; D-glyceraldehyde 3-phosphate and glycerone phosphate from D-glucose: step 3/4. Allosterically activated by ADP and other diphosphonucleosides, and allosterically inhibited by phosphoenolpyruvate. In terms of biological role, catalyzes the phosphorylation of D-fructose 6-phosphate to fructose 1,6-bisphosphate by ATP, the first committing step of glycolysis. The protein is ATP-dependent 6-phosphofructokinase of Bacillus mycoides (strain KBAB4) (Bacillus weihenstephanensis).